A 426-amino-acid chain; its full sequence is 10-deoxymethynolide desosaminyltransferase (426 aa).

It belongs to the glycosyltransferase 28 family. In terms of assembly, forms a complex with DesVIII.

It catalyses the reaction 10-deoxymethynolide + dTDP-alpha-D-desosamine = 10-deoxymethymycin + dTDP + H(+). Its pathway is antibiotic biosynthesis. In terms of biological role, involved in the biosynthesis of the macrolide antibiotics methymycin, neomethymycin, narbomycin, and pikromycin. Catalyzes the attachment of dTDP-D-desosamine onto 12- and 14-membered macrolactone rings 10-deoxymethynolide and narbonolide to produce 10-deoxymethymycin (YC-17) and narbomycin. DesVII is unique among glycosyltransferases in that it requires an additional protein component, DesVIII, for its activity. DesVII can recognize and process not only cyclic substrates of different ring size, but also a variety of linear substrates albeit with reduced, but measurable activities. Both L-sugars and D-sugars are recognized as substrates and variant substitutions at C-3 and C-4 are tolerated, but deoxygenation at C-6 is required. The polypeptide is 10-deoxymethynolide desosaminyltransferase (Streptomyces venezuelae).